The following is a 142-amino-acid chain: Large ribosomal subunit protein uL11 (142 aa).

It belongs to the universal ribosomal protein uL11 family. As to quaternary structure, part of the ribosomal stalk of the 50S ribosomal subunit. Interacts with L10 and the large rRNA to form the base of the stalk. L10 forms an elongated spine to which L12 dimers bind in a sequential fashion forming a multimeric L10(L12)X complex. One or more lysine residues are methylated.

In terms of biological role, forms part of the ribosomal stalk which helps the ribosome interact with GTP-bound translation factors. The chain is Large ribosomal subunit protein uL11 from Haemophilus influenzae (strain 86-028NP).